A 312-amino-acid chain; its full sequence is 4-diphosphocytidyl-2-C-methyl-D-erythritol kinase (312 aa).

Lys-16 is an active-site residue. Residue 101 to 111 (PIGAGLAGGSS) coordinates ATP. Asp-143 is an active-site residue.

Belongs to the GHMP kinase family. IspE subfamily.

The enzyme catalyses 4-CDP-2-C-methyl-D-erythritol + ATP = 4-CDP-2-C-methyl-D-erythritol 2-phosphate + ADP + H(+). It functions in the pathway isoprenoid biosynthesis; isopentenyl diphosphate biosynthesis via DXP pathway; isopentenyl diphosphate from 1-deoxy-D-xylulose 5-phosphate: step 3/6. Its function is as follows. Catalyzes the phosphorylation of the position 2 hydroxy group of 4-diphosphocytidyl-2C-methyl-D-erythritol. In Prochlorococcus marinus (strain MIT 9515), this protein is 4-diphosphocytidyl-2-C-methyl-D-erythritol kinase.